Here is a 136-residue protein sequence, read N- to C-terminus: MSQLVYFSSSSENTQRFIERLGMPAVRIPLNERERIQVDEPYILIVPSYGGGGTAGAVPRQVIRFLNDEHNRALLRGVIASGNRNFGEAYGRAGDVIARKCGVPWLYRFELMGTQSDIENVRKGVTEFWQRQPQNA.

The protein belongs to the NrdI family.

In terms of biological role, probably involved in ribonucleotide reductase function. This chain is Protein NrdI, found in Shigella boydii serotype 4 (strain Sb227).